Here is a 680-residue protein sequence, read N- to C-terminus: MMNHLLLKTQTQTEQVMNVTNPNSIYIKGRLYFKGYKKIELHCFVDTGASLCIASKFVIPEEHWVNAERPIMVKIADGSSITISKVCKDIDLIIVGVIFKIPTVYQQESGIDFIIGNNFCQLYEPFIQFTDRVIFTKNKSYPVHIAKLTRAVRVGTEGFLESMKKRSKTQQPEPVNISTNKIENPLEEIAILSEGRRLSEEKLFITQQRMQKTEELLEKVCSENPLDPNKTKQWMKASIKLSDPSKAIKVKPMKYSPMDREEFDKQIKELLDLKVIKPSKSPHMAPAFLVNNEAENGRGNKRMVVNYKAMNKATVGDAYNLPNKDELLTLIRGKKIFSSFDCKSGFWQVLLDQESRPLTAFTCPQGHYEWNVVPFGLKQAPSIFQRHMDEAFRVFRKFCCVYVDDIVVFSNNEEDHLLHVAMILQKCNQHGIILSKKKAQLFKKKINFLGLEIDEGTHKPQGHILEHINKFPDTLEDKKQLQRFLGILTYASDYIPNLAQMRQPLQAKLKENVPWKWTKEDTLYMQKVKKNLQGFPPLHHPLPEEKLIIETDASDDYWGGMLKAIKINEGTNTELICRYRSGSFKAAERNYHSNDKETLAVINTIKKFSIYLTPVHFLIRTDNTHFKSFVNLNYKGDSKLGRNIRWQAWLSHYSFDVEHIKGTDNHFADFLSREFNKVNS.

Residues 41 to 131 (LHCFVDTGAS…LYEPFIQFTD (91 aa)) are protease. Residue Asp46 is part of the active site. Positions 273–453 (LKVIKPSKSP…KKINFLGLEI (181 aa)) constitute a Reverse transcriptase domain.

It belongs to the caulimoviridae enzymatic polyprotein family.

It carries out the reaction DNA(n) + a 2'-deoxyribonucleoside 5'-triphosphate = DNA(n+1) + diphosphate. Its function is as follows. Encodes for at least two polypeptides: protease (PR) and reverse transcriptase (RT). The protease processes the polyprotein in cis. Reverse transcriptase is multifunctional enzyme that converts the viral RNA genome into dsDNA in viral cytoplasmic capsids. This enzyme displays a DNA polymerase activity that can copy either DNA or RNA templates, and a ribonuclease H (RNase H) activity that cleaves the RNA strand of RNA-DNA heteroduplexes in a partially processive 3'- to 5'-endonucleasic mode. Neo-synthesized pregenomic RNA (pgRNA) are encapsidated, and reverse-transcribed inside the nucleocapsid. Partial (+)DNA is synthesized from the (-)DNA template and generates the relaxed circular DNA (RC-DNA) genome. After budding and infection, the RC-DNA migrates in the nucleus, and is converted into a plasmid-like covalently closed circular DNA (cccDNA). This chain is Enzymatic polyprotein, found in Cauliflower mosaic virus (strain NY8153) (CaMV).